The primary structure comprises 396 residues: Ribosomal RNA large subunit methyltransferase I (396 aa).

Residues 2–79 (AVRIKLKPGR…REEEIDREFF (78 aa)) form the PUA domain.

This sequence belongs to the methyltransferase superfamily. RlmI family.

It is found in the cytoplasm. It carries out the reaction cytidine(1962) in 23S rRNA + S-adenosyl-L-methionine = 5-methylcytidine(1962) in 23S rRNA + S-adenosyl-L-homocysteine + H(+). Its function is as follows. Specifically methylates the cytosine at position 1962 (m5C1962) of 23S rRNA. This chain is Ribosomal RNA large subunit methyltransferase I, found in Shewanella sp. (strain MR-7).